Reading from the N-terminus, the 239-residue chain is Sensory rhodopsin-2 (239 aa).

At 1–3 (MVG) the chain is on the extracellular side. Residues 4–25 (LTTLFWLGAIGMLVGTLAFAWA) form a helical membrane-spanning segment. At 26–33 (GRDAGSGE) the chain is on the cytoplasmic side. The helical transmembrane segment at 34 to 55 (RRYYVTLVGISGIAAVAYVVMA) threads the bilayer. Residues 56–69 (LGVGWVPVAERTVF) lie on the Extracellular side of the membrane. A helical membrane pass occupies residues 70–91 (APRYIDWILTTPLIVYFLGLLA). Residues 92-94 (GLD) lie on the Cytoplasmic side of the membrane. The helical transmembrane segment at 95–117 (SREFGIVITLNTVVMLAGFAGAM) threads the bilayer. The Extracellular portion of the chain corresponds to 118 to 121 (VPGI). A helical membrane pass occupies residues 122–149 (ERYALFGMGAVAFLGLVYYLVGPMTESA). Over 150–153 (SQRS) the chain is Cytoplasmic. A helical transmembrane segment spans residues 154–181 (SGIKSLYVRLRNLTVILWAIYPFIWLLG). The Extracellular portion of the chain corresponds to 182–189 (PPGVALLT). A helical transmembrane segment spans residues 190–222 (PTVDVALIVYLDLVTKVGFGFIALDAAATLRAE). The residue at position 205 (lysine 205) is an N6-(retinylidene)lysine. Over 223 to 239 (HGESLAGVDTDAPAVAD) the chain is Cytoplasmic.

It belongs to the archaeal/bacterial/fungal opsin family. As to quaternary structure, homodimer. Interacts with HTR-II.

It localises to the cell membrane. Photophobic photoreceptor responsible for the negative phototaxis. Activates the sensory rhodopsin II transducer (HTR-II) in response to blue light. The sequence is that of Sensory rhodopsin-2 (sop2) from Natronomonas pharaonis (Natronobacterium pharaonis).